The sequence spans 70 residues: DNA-directed RNA polymerase subunit omega (70 aa).

Belongs to the RNA polymerase subunit omega family. As to quaternary structure, the RNAP catalytic core consists of 2 alpha, 1 beta, 1 beta' and 1 omega subunit. When a sigma factor is associated with the core the holoenzyme is formed, which can initiate transcription.

The enzyme catalyses RNA(n) + a ribonucleoside 5'-triphosphate = RNA(n+1) + diphosphate. Promotes RNA polymerase assembly. Latches the N- and C-terminal regions of the beta' subunit thereby facilitating its interaction with the beta and alpha subunits. The polypeptide is DNA-directed RNA polymerase subunit omega (Methylobacillus flagellatus (strain ATCC 51484 / DSM 6875 / VKM B-1610 / KT)).